A 797-amino-acid chain; its full sequence is Striatin-3 (797 aa).

N-acetylmethionine is present on Met1. Gly residues-rich tracts occupy residues 1 to 13 (MDELAGGGGGGPG) and 23 to 43 (GPGGNLGLSPGGNGAAGGGGP). The disordered stretch occupies residues 1 to 60 (MDELAGGGGGGPGMAAPPRQQQGPGGNLGLSPGGNGAAGGGGPPASEGAGPAAGPELSRP). A compositionally biased stretch (low complexity) spans 44 to 56 (PASEGAGPAAGPE). Residues 71-79 (YIQHEWARF) are caveolin-binding. Residues 77–136 (ARFEMERAHWEVERAELQARIAFLQGERKGQENLKKDLVRRIKMLEYALKQERAKYHKLK) adopt a coiled-coil conformation. The residue at position 150 (Thr150) is a Phosphothreonine. Residues 166-183 (QNSQLTWKQGRQLLRQYL) form a calmodulin-binding region. Ser202, Ser214, and Ser229 each carry phosphoserine. 2 disordered regions span residues 224–278 (LNGG…KHRM) and 313–338 (DGEGAGEARSSGDGTEWDKDDLSPTA). Basic and acidic residues predominate over residues 230 to 241 (PKQKGQEIKRSS). Positions 253–265 (NADDSDEDEENDM) are enriched in acidic residues. A phosphoserine mark is found at Ser257 and Ser335. WD repeat units follow at residues 478–517 (SHFDGVRALAFHPVEPVLVTASEDHTLKLWNLQKTVPAKK), 531–570 (AHIGPVLSLAISSNGEQCFSGGIDATIQWWNMPSPSVDPY), 584–623 (GHTDAVWGLAYSGIKNQLLSCSADGTVRLWNPQEKLPCIC), 679–718 (QSNNHINRVVSHPTLPVTITAHEDRHIKFFDNKTGKMIHS), 721–760 (AHLDAVTSLAVDPNGIYLMSGSHDCSIRLWNLDSKTCVQE), and 767–797 (KLDESIYDVAFHSSKAYIASAGADALAKVFV).

The protein belongs to the WD repeat striatin family. As to quaternary structure, tetramerizes. Part of the core of STRIPAK complexes composed of PP2A catalytic and scaffolding subunits, the striatins (PP2A regulatory subunits), the striatin-associated proteins MOB4, STRIP1 and STRIP2, PDCD10 and members of the STE20 kinases, such as STK24 and STK26. The STRIPAK complex can be extended by adapter proteins such as SLMAP:SIKE1 or CTTNBP2NL. Interacts with CDC42BPB.

Its subcellular location is the cytoplasm. The protein resides in the membrane. Its function is as follows. Calmodulin-binding scaffolding protein which is the center of the striatin-interacting phosphatase and kinase (STRIPAK) complexes. STRIPAK complexes have critical roles in protein (de)phosphorylation and are regulators of multiple signaling pathways including Hippo, MAPK, nuclear receptor and cytoskeleton remodeling. Different types of STRIPAK complexes are involved in a variety of biological processes such as cell growth, differentiation, apoptosis, metabolism and immune regulation. This is Striatin-3 from Homo sapiens (Human).